The primary structure comprises 414 residues: 2,3-diketo-5-methylthiopentyl-1-phosphate enolase (414 aa).

K99 serves as the catalytic Proton acceptor. Residues K148, 174–177 (KDDE), H265, G338, and 360–361 (GG) contribute to the substrate site. The Mg(2+) site is built by K174, D176, and E177. At K174 the chain carries N6-carboxylysine.

The protein belongs to the RuBisCO large chain family. Type IV subfamily. Homodimer. It depends on Mg(2+) as a cofactor.

It carries out the reaction 5-methylsulfanyl-2,3-dioxopentyl phosphate = 2-hydroxy-5-methylsulfanyl-3-oxopent-1-enyl phosphate. Its pathway is amino-acid biosynthesis; L-methionine biosynthesis via salvage pathway; L-methionine from S-methyl-5-thio-alpha-D-ribose 1-phosphate: step 3/6. In terms of biological role, catalyzes the enolization of 2,3-diketo-5-methylthiopentyl-1-phosphate (DK-MTP-1-P) into 2-hydroxy-3-keto-5-methylthiopentenyl-1-phosphate (HK-MTPenyl-1-P). The polypeptide is 2,3-diketo-5-methylthiopentyl-1-phosphate enolase (Bacillus mycoides (strain KBAB4) (Bacillus weihenstephanensis)).